A 130-amino-acid chain; its full sequence is Protachykinin-1 (130 aa).

The first 19 residues, 1 to 19 (MKILVAVAVFFLVSTQLSA), serve as a signal peptide directing secretion. The propeptide occupies 20-56 (EEIGANDDLNYWSDWSDSDQIKEALPEPFEHILQRIA). Met-68 and Met-107 each carry methionine amide.

It belongs to the tachykinin family. In terms of processing, the substance P form is cleaved at Pro-59 by the prolyl endopeptidase FAP (seprase) activity (in vitro). Substance P is also cleaved and degraded by Angiotensin-converting enzyme (ACE) and neprilysin (MME).

It localises to the secreted. In terms of biological role, tachykinins are active peptides which excite neurons, evoke behavioral responses, are potent vasodilators and secretagogues, and contract (directly or indirectly) many smooth muscles. This Mesocricetus auratus (Golden hamster) protein is Protachykinin-1 (TAC1).